The primary structure comprises 481 residues: Phosphoglucosamine mutase (481 aa).

The active-site Phosphoserine intermediate is Ser129. Residues Ser129, Asp271, Asp273, and Asp275 each coordinate Mg(2+). Ser129 carries the phosphoserine modification.

Belongs to the phosphohexose mutase family. It depends on Mg(2+) as a cofactor. Activated by phosphorylation.

The catalysed reaction is alpha-D-glucosamine 1-phosphate = D-glucosamine 6-phosphate. Functionally, catalyzes the conversion of glucosamine-6-phosphate to glucosamine-1-phosphate. The chain is Phosphoglucosamine mutase from Picosynechococcus sp. (strain ATCC 27264 / PCC 7002 / PR-6) (Agmenellum quadruplicatum).